Here is a 655-residue protein sequence, read N- to C-terminus: Threonine--tRNA ligase (655 aa).

The TGS domain maps to 1–66 (MIDLVFPDGS…TGERKFEILT (66 aa)). The tract at residues 248 to 540 (DHRKLGKTMD…LLENFAGALP (293 aa)) is catalytic. Cysteine 340, histidine 391, and histidine 517 together coordinate Zn(2+).

It belongs to the class-II aminoacyl-tRNA synthetase family. Homodimer. Zn(2+) is required as a cofactor.

It localises to the cytoplasm. The enzyme catalyses tRNA(Thr) + L-threonine + ATP = L-threonyl-tRNA(Thr) + AMP + diphosphate + H(+). Functionally, catalyzes the attachment of threonine to tRNA(Thr) in a two-step reaction: L-threonine is first activated by ATP to form Thr-AMP and then transferred to the acceptor end of tRNA(Thr). Also edits incorrectly charged L-seryl-tRNA(Thr). The protein is Threonine--tRNA ligase of Caulobacter vibrioides (strain ATCC 19089 / CIP 103742 / CB 15) (Caulobacter crescentus).